A 127-amino-acid chain; its full sequence is Basic leucine zipper transcriptional factor ATF-like 3 (127 aa).

Positions 1 to 72 (MSQGLPAAGS…LHEEYESLEQ (72 aa)) are disordered. A phosphoserine mark is found at Ser-2 and Ser-31. A bZIP domain is found at 35 to 98 (DDRKVRRREK…KHLTEALKEH (64 aa)). A basic motif region spans residues 37–62 (RKVRRREKNRVAAQRSRKKQTQKADK). Residues 58–67 (QKADKLHEEY) show a composition bias toward basic and acidic residues. Residues 63-91 (LHEEYESLEQENTMLRREIGKLTEELKHL) are leucine-zipper.

This sequence belongs to the bZIP family. In terms of assembly, heterodimer; heterodimerizes with JUN family proteins. Interacts with JUN.

The protein resides in the nucleus. In terms of biological role, AP-1 family transcription factor that controls the differentiation of CD8(+) thymic conventional dendritic cells in the immune system. Required for development of CD8-alpha(+) classical dendritic cells (cDCs) and related CD103(+) dendritic cells that cross-present antigens to CD8 T-cells and produce interleukin-12 (IL12) in response to pathogens. Acts via the formation of a heterodimer with JUN family proteins that recognizes and binds DNA sequence 5'-TGA[CG]TCA-3' and regulates expression of target genes. This Homo sapiens (Human) protein is Basic leucine zipper transcriptional factor ATF-like 3 (BATF3).